Here is a 359-residue protein sequence, read N- to C-terminus: Fructose-1,6-bisphosphatase class 1 (359 aa).

Mg(2+) contacts are provided by glutamate 95, aspartate 117, leucine 119, and aspartate 120. Residues 120–123 and asparagine 212 each bind substrate; that span reads DGSS. Glutamate 284 lines the Mg(2+) pocket.

Belongs to the FBPase class 1 family. As to quaternary structure, homotetramer. The cofactor is Mg(2+).

It localises to the cytoplasm. The catalysed reaction is beta-D-fructose 1,6-bisphosphate + H2O = beta-D-fructose 6-phosphate + phosphate. It functions in the pathway carbohydrate biosynthesis; gluconeogenesis. The chain is Fructose-1,6-bisphosphatase class 1 from Hydrogenophilus thermoluteolus (Pseudomonas hydrogenothermophila).